A 293-amino-acid polypeptide reads, in one-letter code: MNEKDLKALVEQLVGQMVGELDTNVVSETVKKATEVVVDNNACIDDITEVDIRKQLLVKNPKDAEAYLDMKAKTPARLGIGRAGTRYKTETVLRFRADHAAAQDAVFSYVDEEFIKENNMFAVETLCKDKDEYLTRPDLGRKFSPETINNIKSKFGTNQKVLILVGDGLSSAAIEANLKDCVPAIKQGLKMYGIDSSEILFVKHCRVGAMDHLGEELGCEVICMLVGERPGLVTAESMSAYIAYKPYIGMAEAKRTVISNIHKGGTTAVEAGAHIAELIKTMLDKKASGIDLK.

2 residues coordinate adenosylcob(III)alamin: V207 and E228.

It belongs to the EutC family. In terms of assembly, the basic unit is a heterodimer which dimerizes to form tetramers. The heterotetramers trimerize; 6 large subunits form a core ring with 6 small subunits projecting outwards. Requires adenosylcob(III)alamin as cofactor.

It is found in the bacterial microcompartment. It carries out the reaction ethanolamine = acetaldehyde + NH4(+). It participates in amine and polyamine degradation; ethanolamine degradation. In terms of biological role, catalyzes the deamination of various vicinal amino-alcohols to oxo compounds. Allows this organism to utilize ethanolamine as the sole source of nitrogen and carbon in the presence of external vitamin B12. This is Ethanolamine ammonia-lyase small subunit from Clostridioides difficile (strain 630) (Peptoclostridium difficile).